We begin with the raw amino-acid sequence, 400 residues long: Elongation factor Tu (400 aa).

In terms of domain architecture, tr-type G spans 10 to 209; sequence KPHVNIGTIG…VVDKYIPTPQ (200 aa). The G1 stretch occupies residues 19–26; sequence GHVDHGKT. 19–26 contacts GTP; sequence GHVDHGKT. Thr26 contributes to the Mg(2+) binding site. The segment at 60-64 is G2; that stretch reads GITIN. The segment at 81–84 is G3; the sequence is DCPG. GTP-binding positions include 81–85 and 136–139; these read DCPGH and NKVD. The tract at residues 136–139 is G4; it reads NKVD. The G5 stretch occupies residues 174–176; that stretch reads SAL.

Belongs to the TRAFAC class translation factor GTPase superfamily. Classic translation factor GTPase family. EF-Tu/EF-1A subfamily. As to quaternary structure, monomer.

The protein localises to the cytoplasm. It carries out the reaction GTP + H2O = GDP + phosphate + H(+). Functionally, GTP hydrolase that promotes the GTP-dependent binding of aminoacyl-tRNA to the A-site of ribosomes during protein biosynthesis. The chain is Elongation factor Tu from Caldicellulosiruptor saccharolyticus (strain ATCC 43494 / DSM 8903 / Tp8T 6331).